The primary structure comprises 245 residues: Probable phosphatase YcdX (245 aa).

Positions 7, 9, 15, 40, 73, 101, 131, 192, and 194 each coordinate Zn(2+).

This sequence belongs to the PHP family. As to quaternary structure, homotrimer. The cofactor is Zn(2+).

This chain is Probable phosphatase YcdX, found in Shigella dysenteriae serotype 1 (strain Sd197).